We begin with the raw amino-acid sequence, 1014 residues long: Ephrin type-B receptor 6 (1014 aa).

The first 32 residues, 1 to 32 (MATEGTTGSGSRVVAGMVCSLWLLVLGSSVLA), serve as a signal peptide directing secretion. At 33–591 (LEEVLLDTTG…LPEKLSLVIG (559 aa)) the chain is on the extracellular side. The Eph LBD domain occupies 34-232 (EEVLLDTTGE…FSYTCPSVLR (199 aa)). 2 consecutive Fibronectin type-III domains span residues 364 to 479 (PPSA…TSHE) and 480 to 575 (VPSA…TLPQ). Residue Asn473 is glycosylated (N-linked (GlcNAc...) asparagine). A helical membrane pass occupies residues 592-612 (SILGALAFLLLAAITVLAVIF). Topologically, residues 613 to 1014 (QRKRRGTGYT…HLRQPGSVEV (402 aa)) are cytoplasmic. Residues 663 to 912 (IKIEEVIGAG…QLVAAFDKMI (250 aa)) enclose the Protein kinase domain. An ATP-binding site is contributed by 669-677 (IGAGSFGEV). An SAM domain is found at 941-1005 (PCLDSPQAWL…LHNIQLLQQH (65 aa)). The short motif at 1012-1014 (VEV) is the PDZ-binding element.

The protein belongs to the protein kinase superfamily. Tyr protein kinase family. Ephrin receptor subfamily. In terms of assembly, interacts with CBL and EPHB1. Interacts with FYN; this interaction takes place in a ligand-independent manner. Ligand-binding increases phosphorylation on tyrosine residues. Phosphorylation on tyrosine residues is mediated by transphosphorylation by the catalytically active EPHB1 in a ligand-independent manner. Tyrosine phosphorylation of the receptor may act as a switch on the functional transition from cell adhesion/attraction to de-adhesion/repulsion. As to expression, high level in thymus, and brain. Very low levels of expression in kidney, lung, liver, bone marrow, skeletal muscle, spleen from 2 week old and adult mice, heart, testes and embryonic stem cells.

It localises to the cell membrane. The protein resides in the secreted. In terms of biological role, kinase-defective receptor for members of the ephrin-B family. Binds to ephrin-B1 and ephrin-B2. Modulates cell adhesion and migration by exerting both positive and negative effects upon stimulation with ephrin-B2. Inhibits JNK activation, T-cell receptor-induced IL-2 secretion and CD25 expression upon stimulation with ephrin-B2. The protein is Ephrin type-B receptor 6 (Ephb6) of Mus musculus (Mouse).